A 418-amino-acid chain; its full sequence is Actin-like protein C08B11.6 (418 aa).

This sequence belongs to the actin family. ARP6 subfamily.

The protein resides in the cytoplasm. It is found in the cytoskeleton. This Caenorhabditis elegans protein is Actin-like protein C08B11.6 (arp-6).